A 95-amino-acid chain; its full sequence is Protein E7 (95 aa).

The interval Met-1–Gln-41 is E7 terminal domain. The short motif at Leu-22–Glu-26 is the LXCXE motif; interaction with host RB1 and TMEM173/STING element. The segment at Cys-53–Cys-91 is a zinc-finger region. Positions Ile-72–His-80 match the Nuclear export signal motif.

Belongs to the papillomaviridae E7 protein family. Homodimer. Homooligomer. Interacts with host RB1; this interaction induces dissociation of RB1-E2F1 complex thereby disrupting RB1 activity. Interacts with host EP300; this interaction represses EP300 transcriptional activity. Interacts with protein E2; this interaction inhibits E7 oncogenic activity. Interacts with host TMEM173/STING; this interaction impairs the ability of TMEM173/STING to sense cytosolic DNA and promote the production of type I interferon (IFN-alpha and IFN-beta). Post-translationally, highly phosphorylated.

The protein resides in the host cytoplasm. It is found in the host nucleus. In terms of biological role, plays a role in viral genome replication by driving entry of quiescent cells into the cell cycle. Stimulation of progression from G1 to S phase allows the virus to efficiently use the cellular DNA replicating machinery to achieve viral genome replication. E7 protein has both transforming and trans-activating activities. Induces the disassembly of the E2F1 transcription factor from RB1, with subsequent transcriptional activation of E2F1-regulated S-phase genes. Interferes with host histone deacetylation mediated by HDAC1 and HDAC2, leading to transcription activation. Also plays a role in the inhibition of both antiviral and antiproliferative functions of host interferon alpha. Interaction with host TMEM173/STING impairs the ability of TMEM173/STING to sense cytosolic DNA and promote the production of type I interferon (IFN-alpha and IFN-beta). This Human papillomavirus type 54 protein is Protein E7.